The chain runs to 66 residues: Large ribosomal subunit protein bL33c (66 aa).

Belongs to the bacterial ribosomal protein bL33 family.

The protein resides in the plastid. The protein localises to the chloroplast. This chain is Large ribosomal subunit protein bL33c, found in Daucus carota (Wild carrot).